We begin with the raw amino-acid sequence, 342 residues long: MTQFNIPVTMSSSLSIILVILVSLSTAHSELCNPQDKQALLQIKKDLGNPTTLSSWLPTTDCCNRTWLGVLCDTDTQTYRVNNLDLSGLNLPKPYPIPSSLANLPYLNFLYIGGINNLVGPIPPAIAKLTQLHYLYITHTNVSGAIPDFLSQIKTLVTLDFSYNALSGTLPPSISSLPNLVGITFDGNRISGAIPDSYGSFSKLFTSMTISRNRLTGKIPPTFANLNLAFVDLSRNMLEGDASVLFGSDKNTQKIHLAKNSLAFDLGKVGLSKNLNGLDLRNNRIYGTLPQGLTQLKFLHSLNVSFNNLCGEIPQGGNLQRFDVSAYANNKCLCGSPLPACT.

An N-terminal signal peptide occupies residues 1 to 29 (MTQFNIPVTMSSSLSIILVILVSLSTAHS). 2 cysteine pairs are disulfide-bonded: cysteine 32/cysteine 62 and cysteine 63/cysteine 72. A glycan (N-linked (GlcNAc...) (complex) asparagine) is linked at asparagine 64. 10 LRR repeats span residues 82-107 (NNLD…LPYL), 108-132 (NFLY…LTQL), 133-156 (HYLY…IKTL), 157-180 (VTLD…LPNL), 181-205 (VGIT…SKLF), 206-228 (TSMT…NLNL), 229-252 (AFVD…DKNT), 253-275 (QKIH…SKNL), 276-299 (NGLD…LKFL), and 300-319 (HSLN…GGNL). Residue asparagine 141 is glycosylated (N-linked (GlcNAc...) (complex) asparagine). Asparagine 303 is a glycosylation site (N-linked (GlcNAc...) asparagine). 2 disulfides stabilise this stretch: cysteine 310/cysteine 332 and cysteine 334/cysteine 341.

This sequence belongs to the polygalacturonase-inhibiting protein family. Post-translationally, asn-303 is not glycosylated.

It is found in the secreted. The protein resides in the cell wall. The protein localises to the membrane. Its function is as follows. Inhibitor of fungal polygalacturonase. It is an important factor for plant resistance to phytopathogenic fungi. Inhibits all polygalacturonases (PG) tested, with the exception of PG from F.oxysporum which was only inhibited at 60%. The sequence is that of Polygalacturonase inhibitor 2 (PGIP2) from Phaseolus vulgaris (Kidney bean).